We begin with the raw amino-acid sequence, 148 residues long: Secretory phospholipase A2 (148 aa).

A signal peptide spans Met-1 to Ala-23. Asn-61 carries an N-linked (GlcNAc...) asparagine glycan. Cys-62 and Cys-78 are oxidised to a cystine. His-81 is an active-site residue. Asp-82 provides a ligand contact to Ca(2+).

This sequence belongs to the phospholipase A2 family. Ca(2+) serves as cofactor.

It is found in the secreted. It catalyses the reaction a 1,2-diacyl-sn-glycero-3-phosphocholine + H2O = a 1-acyl-sn-glycero-3-phosphocholine + a fatty acid + H(+). Secretory phospholipase that catalyzes the calcium-dependent hydrolysis of the 2-acyl groups in 3-sn-phosphoglycerides. Increases the ability to utilize host-derived nutrients and lipids, and promotes lipid dropplets accumulation. Plays a role in virulence. This Arthroderma benhamiae (strain ATCC MYA-4681 / CBS 112371) (Trichophyton mentagrophytes) protein is Secretory phospholipase A2.